Consider the following 94-residue polypeptide: MATESPNSVQKIVVHLRATGGAPILKQSKFKVSGSDKFANVIDFLRRQLHSDSLFVYVNSAFSPNPDESVIDLYNNFGFDGKLVVNYACSMAWG.

N-acetylalanine is present on Ala2. Gly94 participates in a covalent cross-link: Glycyl lysine isopeptide (Gly-Lys) (interchain with K-128 in ATG5).

The protein belongs to the ATG12 family. In terms of tissue distribution, ubiquitous.

It localises to the cytoplasm. Its function is as follows. Ubiquitin-like protein involved in cytoplasm to vacuole transport (Cvt) and autophagy vesicles formation. Conjugation with ATG5 through a ubiquitin-like conjugating system involving also ATG7 as an E1-like activating enzyme and ATG10 as an E2-like conjugating enzyme, is essential for its function. ATG12/ATG5 conjugate has an essential role in plant nutrient recycling. The polypeptide is Ubiquitin-like protein ATG12B (ATG12B) (Arabidopsis thaliana (Mouse-ear cress)).